The sequence spans 242 residues: Terpene cyclase cle7 (242 aa).

Helical transmembrane passes span 20 to 40 (LLLTLFSLSGTGWLINYITTI), 50 to 69 (GVSLVALTNNLAWELVFAIL), 79 to 101 (VILRSWLFVDIFVIYTTAKFARS), 117 to 137 (LFVLFGILGFFSGHWALSVLL), 143 to 163 (FYWSGMMCLVVMSGTALGILV), 172 to 192 (SYGMWFSRFVGSIFAVASLFL), and 207 to 227 (ILMRWFAGAFVVLDGLYGVCF).

This sequence belongs to the paxB family.

The protein resides in the membrane. It participates in secondary metabolite biosynthesis; terpenoid biosynthesis. Functionally, non-reducing polyketide synthase; part of the cluster A that mediates the biosynthesis of chevalone E and its oxidized derivatives that possess a unique five-membered lactone ring and can synergistically enhance the cytotoxicity of doxorubicin (DOX) in breast cancer cells. Within the pathway, cle7 takes part to the biosynthesis of the molecular scaffold by catalyzing the cyclization of the prenyl group initiated by protonation and ring-opening of the epoxide to produce the chevalone E intermediate. The molecular scaffold is commonly biosynthesized by a series of enzymes including the non-reducing polyketide synthase (NR-PKS) cle1 that produces the alpha-pyrone triacetic acid lactone (TAL); The membrane-bound prenyltransferase cle5 that accepts TAL as its substrate to perform a C-3 geranylgeranylation reaction, in which the pathway-dedicated GGPS cle6 is required to provide GGPP, the other substrate of cle5; the FAD-dependent monooxygenase Cle3 that forms an (S)-epoxide ring at the terminal olefin of the geranylgeranyl group; and the terpene cyclase Cle7 that catalyzes the cyclization of the prenyl group that yields the pentacyclic pathway intermediate chevalone E. Chevalone E can derivatize into seven new oxidized analogs by the cytochrome P450 monooxygenases cle2 (acting at C-20) and cle4 (acting at C-11 and C-12). This chain is Terpene cyclase cle7, found in Aspergillus versicolor.